Here is a 593-residue protein sequence, read N- to C-terminus: UvrABC system protein C (593 aa).

In terms of domain architecture, GIY-YIG spans 17–94 (MEPGCYLMKD…IKQYQPRYNI (78 aa)). Positions 199 to 234 (KTILKSLEERMLTASESLDFERAKEYRDLIQHIQNL) constitute a UVR domain.

This sequence belongs to the UvrC family. Interacts with UvrB in an incision complex.

The protein resides in the cytoplasm. In terms of biological role, the UvrABC repair system catalyzes the recognition and processing of DNA lesions. UvrC both incises the 5' and 3' sides of the lesion. The N-terminal half is responsible for the 3' incision and the C-terminal half is responsible for the 5' incision. This is UvrABC system protein C from Staphylococcus aureus (strain bovine RF122 / ET3-1).